Reading from the N-terminus, the 246-residue chain is Ribonuclease PH (246 aa).

Residues R91 and 129 to 131 contribute to the phosphate site; that span reads GTR.

This sequence belongs to the RNase PH family. In terms of assembly, homohexameric ring arranged as a trimer of dimers.

It carries out the reaction tRNA(n+1) + phosphate = tRNA(n) + a ribonucleoside 5'-diphosphate. Its function is as follows. Phosphorolytic 3'-5' exoribonuclease that plays an important role in tRNA 3'-end maturation. Removes nucleotide residues following the 3'-CCA terminus of tRNAs; can also add nucleotides to the ends of RNA molecules by using nucleoside diphosphates as substrates, but this may not be physiologically important. Probably plays a role in initiation of 16S rRNA degradation (leading to ribosome degradation) during starvation. The protein is Ribonuclease PH of Burkholderia ambifaria (strain ATCC BAA-244 / DSM 16087 / CCUG 44356 / LMG 19182 / AMMD) (Burkholderia cepacia (strain AMMD)).